A 207-amino-acid chain; its full sequence is Germin-like protein 1 (207 aa).

The N-terminal stretch at 1 to 17 is a signal peptide; it reads MLRIIFLLSLLFALSND. Residues cysteine 23 and cysteine 38 are joined by a disulfide bond. Residues 51 to 197 enclose the Cupin type-1 domain; it reads FSLGTPGNTT…TTFLPPATVK (147 aa). Asparagine 58 carries N-linked (GlcNAc...) asparagine glycosylation. The Mn(2+) site is built by histidine 99, histidine 101, glutamate 106, and histidine 145.

Belongs to the germin family. As to quaternary structure, oligomer (believed to be a pentamer but probably hexamer).

The protein resides in the secreted. It localises to the extracellular space. Its subcellular location is the apoplast. In terms of biological role, may play a role in plant defense. Probably has no oxalate oxidase activity even if the active site is conserved. The chain is Germin-like protein 1 (GER1) from Brassica napus (Rape).